Reading from the N-terminus, the 213-residue chain is MITIVLLILAYLLGSIPSGLWIGQVFFQINLREHGSGNTGTTNTFRILGKKAGMATFVIDFFKGTLATLLPIIFHLQGVSPLIFGLLAVIGHTFPIFAGFKGGKAVATSAGVIFGFAPIFCLYLAIIFFGALYLGSMISLSSVTASIAAVIGVLLFPLFGFILSNYDSLFITIILALASLIIIRHKDNIARIKNKTENLVPWGLNLTHQDPKK.

A run of 6 helical transmembrane segments spans residues Ile2–Ile22, Ala52–Phe74, Pro81–Phe100, Val112–Leu132, Val143–Leu163, and Ser164–Arg184.

Belongs to the PlsY family. As to quaternary structure, probably interacts with PlsX.

The protein localises to the cell membrane. It catalyses the reaction an acyl phosphate + sn-glycerol 3-phosphate = a 1-acyl-sn-glycero-3-phosphate + phosphate. The protein operates within lipid metabolism; phospholipid metabolism. Catalyzes the transfer of an acyl group from acyl-phosphate (acyl-PO(4)) to glycerol-3-phosphate (G3P) to form lysophosphatidic acid (LPA). This enzyme utilizes acyl-phosphate as fatty acyl donor, but not acyl-CoA or acyl-ACP. This chain is Glycerol-3-phosphate acyltransferase, found in Streptococcus pneumoniae (strain Hungary19A-6).